Here is a 314-residue protein sequence, read N- to C-terminus: tRNA pseudouridine synthase B (314 aa).

His-43 contacts substrate. The active-site Nucleophile is the Asp-48. Substrate is bound by residues Tyr-76, Tyr-179, and Leu-200.

This sequence belongs to the pseudouridine synthase TruB family. Type 1 subfamily.

The enzyme catalyses uridine(55) in tRNA = pseudouridine(55) in tRNA. Its function is as follows. Responsible for synthesis of pseudouridine from uracil-55 in the psi GC loop of transfer RNAs. This is tRNA pseudouridine synthase B from Cronobacter sakazakii (strain ATCC BAA-894) (Enterobacter sakazakii).